The chain runs to 318 residues: Methionyl-tRNA formyltransferase (318 aa).

112–115 is a (6S)-5,6,7,8-tetrahydrofolate binding site; it reads SILP.

The protein belongs to the Fmt family.

The catalysed reaction is L-methionyl-tRNA(fMet) + (6R)-10-formyltetrahydrofolate = N-formyl-L-methionyl-tRNA(fMet) + (6S)-5,6,7,8-tetrahydrofolate + H(+). Functionally, attaches a formyl group to the free amino group of methionyl-tRNA(fMet). The formyl group appears to play a dual role in the initiator identity of N-formylmethionyl-tRNA by promoting its recognition by IF2 and preventing the misappropriation of this tRNA by the elongation apparatus. In Shewanella sp. (strain MR-4), this protein is Methionyl-tRNA formyltransferase.